Reading from the N-terminus, the 558-residue chain is MPWWLISLTFIYRLFLCATIRTVEAPDEWWQSTEVAYNMVFGKGHLPWEWRYGLRSVFFPAVVALPFYLLKLLGRDTTWAVWFAPRVLQALVLTLIDVSVFRMGATLDELLAKRELELAEEMRQSKTKGFSYFREVFVSRSRRGICNSISYTALLLSLSNWYMAYCGVRLYGNVIEALLVLLTLQQRRYVPFLLLTGLASAIRVTSAVVLSPLVFRHLANATREHGFTRGLFRIVLTGLIVLVAVLGGVMVLDYCFYGRWVLTPLAFFRFNVLHNLSRFFGEHPWYFYVGPVLVGIVGPHVLFTIAAPLVLWRDTASRAVSRPVLGMLGIGAWTLGFYSLIDHKEMRFVFVVIPLSLITAAFVLVRWSRTSAVVVKMNRLFVLFNIVMIYLMGYVYRRGPLDVMAEVRDGPRINRLDVIATCYTVPGYSYMHRKVNHLGFVDCSIDLDEKTGLPKVTEDIMFRRYPKEYVLWRYDGKHSFNMGDLEESRKASELQSVVMPKSAPHPDAMVMTRAVAKEIEEPFLKRHGYRLYRTFLHSPLTLAPYEDIYIQMWVKVTK.

Transmembrane regions (helical) follow at residues 53–73 (GLRSVFFPAVVALPFYLLKLL), 81–101 (VWFAPRVLQALVLTLIDVSVF), 164–184 (AYCGVRLYGNVIEALLVLLTL), and 190–210 (VPFLLLTGLASAIRVTSAVVL). An N-linked (GlcNAc...) asparagine glycan is attached at Asn-220. A helical transmembrane segment spans residues 234-254 (IVLTGLIVLVAVLGGVMVLDY). N-linked (GlcNAc...) asparagine glycosylation occurs at Asn-275. The next 4 helical transmembrane spans lie at 292–312 (VLVGIVGPHVLFTIAAPLVLW), 323–343 (PVLGMLGIGAWTLGFYSLIDH), 348–368 (FVFVVIPLSLITAAFVLVRWS), and 372–392 (AVVVKMNRLFVLFNIVMIYLM).

This sequence belongs to the glycosyltransferase 22 family. PIGB subfamily.

Its subcellular location is the endoplasmic reticulum membrane. The protein operates within glycolipid biosynthesis; glycosylphosphatidylinositol-anchor biosynthesis. In terms of biological role, mannosyltransferase involved in glycosylphosphatidylinositol-anchor biosynthesis. Transfers the third alpha-1,2-mannose to Man2-GlcN-acyl-PI during GPI precursor assembly. This chain is GPI mannosyltransferase 3 (GPI10), found in Trypanosoma brucei brucei (strain 927/4 GUTat10.1).